Here is a 44-residue protein sequence, read N- to C-terminus: Thymosin beta-4, Y-chromosomal (44 aa).

Residues methionine 1–serine 44 form a disordered region. 2 stretches are compositionally biased toward basic and acidic residues: residues glutamate 9–glutamate 25 and glutamate 33–serine 44.

It belongs to the thymosin beta family. As to expression, ubiquitous.

The protein resides in the cytoplasm. The protein localises to the cytoskeleton. Its function is as follows. Plays an important role in the organization of the cytoskeleton. Binds to and sequesters actin monomers (G actin) and therefore inhibits actin polymerization. This is Thymosin beta-4, Y-chromosomal (TMSB4Y) from Homo sapiens (Human).